The sequence spans 157 residues: UPF0262 protein Rleg2_0240 (157 aa).

It belongs to the UPF0262 family.

The polypeptide is UPF0262 protein Rleg2_0240 (Rhizobium leguminosarum bv. trifolii (strain WSM2304)).